A 184-amino-acid polypeptide reads, in one-letter code: Photosystem I assembly protein Ycf4 (184 aa).

Helical transmembrane passes span 22 to 42 and 57 to 77; these read FCWA…GTSS and IIFF…LFIS.

It belongs to the Ycf4 family.

Its subcellular location is the plastid. The protein localises to the chloroplast thylakoid membrane. Functionally, seems to be required for the assembly of the photosystem I complex. This is Photosystem I assembly protein Ycf4 from Lepidium virginicum (Virginia pepperweed).